Reading from the N-terminus, the 333-residue chain is Ketol-acid reductoisomerase (NADP(+)) (333 aa).

Residues 6 to 186 enclose the KARI N-terminal Rossmann domain; sequence TRVYTECDAD…GALRAGAIQT (181 aa). Residues 29-32, lysine 52, serine 55, serine 57, and 87-90 contribute to the NADP(+) site; these read YGSQ and DPAQ. Histidine 112 is a catalytic residue. Glycine 138 provides a ligand contact to NADP(+). In terms of domain architecture, KARI C-terminal knotted spans 187–332; it reads TFTEETETDL…ARLRALFSWS (146 aa). Mg(2+) contacts are provided by aspartate 195, glutamate 199, glutamate 231, and glutamate 235. Substrate is bound at residue serine 256.

Belongs to the ketol-acid reductoisomerase family. It depends on Mg(2+) as a cofactor.

The enzyme catalyses (2R)-2,3-dihydroxy-3-methylbutanoate + NADP(+) = (2S)-2-acetolactate + NADPH + H(+). It catalyses the reaction (2R,3R)-2,3-dihydroxy-3-methylpentanoate + NADP(+) = (S)-2-ethyl-2-hydroxy-3-oxobutanoate + NADPH + H(+). It functions in the pathway amino-acid biosynthesis; L-isoleucine biosynthesis; L-isoleucine from 2-oxobutanoate: step 2/4. The protein operates within amino-acid biosynthesis; L-valine biosynthesis; L-valine from pyruvate: step 2/4. Involved in the biosynthesis of branched-chain amino acids (BCAA). Catalyzes an alkyl-migration followed by a ketol-acid reduction of (S)-2-acetolactate (S2AL) to yield (R)-2,3-dihydroxy-isovalerate. In the isomerase reaction, S2AL is rearranged via a Mg-dependent methyl migration to produce 3-hydroxy-3-methyl-2-ketobutyrate (HMKB). In the reductase reaction, this 2-ketoacid undergoes a metal-dependent reduction by NADPH to yield (R)-2,3-dihydroxy-isovalerate. The polypeptide is Ketol-acid reductoisomerase (NADP(+)) (Tropheryma whipplei (strain TW08/27) (Whipple's bacillus)).